The primary structure comprises 355 residues: MHAALVPTWSSPCPIYTEIPDPGPPPPEQLQLKVLAVGIPRVVRLRARGIHPTAKSASLPYDPSIDGVGIDEQTGIMYYILPLSASCLAEKVNVDRDNLVPLQPGAPKPQPRNGPENGYGIALGDAADHRAETLDPIAIAGLVNPVSSSWMALRTRVDGEITGKTVLVLGATSKSGRAAVLVARFLGANKVIGVARREEGLRSVEGLDGWVTSGDMLPGETGVRFALPDWVGPVHIVLDYVGGSVAAGVLGSAEIEEGRELQYVQVGNLALELGTGEKHMFETLPGHLISRKPICIRGSGMGSFSRRDLVREMPGLVAFLARMKAPFGIASAPMCEVASVWQDEDTKGSRVVIVP.

This sequence belongs to the zinc-containing alcohol dehydrogenase family. NADPH is required as a cofactor.

It functions in the pathway secondary metabolite biosynthesis. Its function is as follows. Probable NADPH-dependent quinone reductase; part of the gene cluster that mediates the biosynthesis of terrequinone A, an antitumor agent. The first step in the biosynthetic pathway for terrequinone A is formation of indole pyruvic acid (IPA) from L-tryptophan by the aminotransferase tdiD. The nonribosomal peptide synthase tdiA then immediately converts unstable IPA to didemethylasterriquinone D (DDAQ D), via condensation of 2 IPA molecules. The symmetric connectivity of the 2 IPA molecules is thought to arise by head-to-tail dual Claisen condensations facilitated by the TE domain. TdiB then catalyzes reverse prenylation by transferring dimethylallyl diphosphate to carbon atom 2' of DDAQ D, to yield asterriquinone C-1. Finally, tdiC and tdiE enzymes robustly convert asterriquinone C-1 to terrequinone A via a transformation involving regular prenylation at carbon atom 5, which requires elimination of the hydroxy group on C-5. The sequence is that of Probable NADPH-dependent quinone reductase tdiC from Emericella nidulans (strain FGSC A4 / ATCC 38163 / CBS 112.46 / NRRL 194 / M139) (Aspergillus nidulans).